We begin with the raw amino-acid sequence, 93 residues long: Acylphosphatase (93 aa).

The 91-residue stretch at 3–93 (KQQYFISGKV…FQFNNFKIYY (91 aa)) folds into the Acylphosphatase-like domain. Catalysis depends on residues Arg18 and Asn36.

Belongs to the acylphosphatase family.

The enzyme catalyses an acyl phosphate + H2O = a carboxylate + phosphate + H(+). The sequence is that of Acylphosphatase (acyP) from Borrelia garinii subsp. bavariensis (strain ATCC BAA-2496 / DSM 23469 / PBi) (Borreliella bavariensis).